Reading from the N-terminus, the 145-residue chain is Protein BUD31 homolog 2 (145 aa).

The protein belongs to the BUD31 (G10) family.

The protein localises to the nucleus. This Oryza sativa subsp. japonica (Rice) protein is Protein BUD31 homolog 2.